Consider the following 332-residue polypeptide: NAD-dependent protein deacetylase hst2 (332 aa).

The 263-residue stretch at 7 to 269 (KHVDSSKHLE…RALCKLLGWS (263 aa)) folds into the Deacetylase sirtuin-type domain. Residues 35–55 (GAGI…TGIY) and 118–121 (QNID) contribute to the NAD(+) site. Residue His-138 is the Proton acceptor of the active site. Zn(2+)-binding residues include Cys-146, Cys-149, Cys-170, and Cys-173. Residues 210–212 (GTS), 235–237 (NRE), and Cys-255 each bind NAD(+).

It belongs to the sirtuin family. Class I subfamily. It depends on Zn(2+) as a cofactor.

Its subcellular location is the cytoplasm. It localises to the nucleus. The enzyme catalyses N(6)-acetyl-L-lysyl-[protein] + NAD(+) + H2O = 2''-O-acetyl-ADP-D-ribose + nicotinamide + L-lysyl-[protein]. Functionally, NAD-dependent histone deacetylase, which could function in telomeric silencing, cell cycle progression and chromosome stability. The sequence is that of NAD-dependent protein deacetylase hst2 (hst2) from Schizosaccharomyces pombe (strain 972 / ATCC 24843) (Fission yeast).